Consider the following 543-residue polypeptide: 2-succinyl-5-enolpyruvyl-6-hydroxy-3-cyclohexene-1-carboxylate synthase (543 aa).

Belongs to the TPP enzyme family. MenD subfamily. In terms of assembly, homodimer. Requires Mg(2+) as cofactor. Mn(2+) is required as a cofactor. Thiamine diphosphate serves as cofactor.

It carries out the reaction isochorismate + 2-oxoglutarate + H(+) = 5-enolpyruvoyl-6-hydroxy-2-succinyl-cyclohex-3-ene-1-carboxylate + CO2. Its pathway is quinol/quinone metabolism; 1,4-dihydroxy-2-naphthoate biosynthesis; 1,4-dihydroxy-2-naphthoate from chorismate: step 2/7. It participates in quinol/quinone metabolism; menaquinone biosynthesis. Catalyzes the thiamine diphosphate-dependent decarboxylation of 2-oxoglutarate and the subsequent addition of the resulting succinic semialdehyde-thiamine pyrophosphate anion to isochorismate to yield 2-succinyl-5-enolpyruvyl-6-hydroxy-3-cyclohexene-1-carboxylate (SEPHCHC). The polypeptide is 2-succinyl-5-enolpyruvyl-6-hydroxy-3-cyclohexene-1-carboxylate synthase (Corynebacterium glutamicum (strain R)).